The primary structure comprises 152 residues: Protein-export protein SecB (152 aa).

It belongs to the SecB family. In terms of assembly, homotetramer, a dimer of dimers. One homotetramer interacts with 1 SecA dimer.

Its subcellular location is the cytoplasm. In terms of biological role, one of the proteins required for the normal export of preproteins out of the cell cytoplasm. It is a molecular chaperone that binds to a subset of precursor proteins, maintaining them in a translocation-competent state. It also specifically binds to its receptor SecA. This is Protein-export protein SecB from Thiobacillus denitrificans (strain ATCC 25259 / T1).